Consider the following 15281-residue polypeptide: Cyclosporin synthetase simA (15281 aa).

Residues Ser34–Thr463 are condensation 1. Residues Ser513–Val918 form an adenylation 1 region. One can recognise a Carrier 1 domain in the interval Ala1026 to Ser1100. At Ser1060 the chain carries O-(pantetheine 4'-phosphoryl)serine. The segment at Ser1118–Thr1549 is condensation 2. Residues Ser1599–Val2004 are adenylation 2. The segment at Ser2067–Val2251 is methyltransferase (M) domain 1. The 75-residue stretch at Ala2524–Thr2598 folds into the Carrier 2 domain. Ser2558 bears the O-(pantetheine 4'-phosphoryl)serine mark. Positions Ser2616–Ala3044 are condensation 3. The interval Ser3096–Val3498 is adenylation 3. The interval Ser3562–Phe3749 is methyltransferase (M) domain 2. Residues Ala4011–Ser4085 enclose the Carrier 3 domain. Ser4045 carries the post-translational modification O-(pantetheine 4'-phosphoryl)serine. The interval Val4100–Pro4530 is condensation 4. Residues Ser4582–Val4986 form an adenylation 4 region. The methyltransferase (M) domain 3 stretch occupies residues Thr5052 to Thr5241. The Carrier 4 domain occupies Pro5503–Ser5577. At Ser5537 the chain carries O-(pantetheine 4'-phosphoryl)serine. The interval Val5592–Pro6023 is condensation 5. Residues Thr6075–Val6478 are adenylation 5. The segment at Trp6545–Leu6729 is methyltransferase (M) domain 4. A Carrier 5 domain is found at Ala7000 to Ser7074. An O-(pantetheine 4'-phosphoryl)serine modification is found at Ser7034. Residues Ser7092–Ser7517 are condensation 6. The segment at Thr7572 to Val7976 is adenylation 6. Residues Pro8060–Ser8134 form the Carrier 6 domain. At Ser8094 the chain carries O-(pantetheine 4'-phosphoryl)serine. The condensation 7 stretch occupies residues Ser8152–Ile8582. An adenylation 7 region spans residues Thr8633 to Val9038. The interval Pro9111–Asp9288 is methyltransferase (M) domain 5. The 75-residue stretch at Ala9555 to Ser9629 folds into the Carrier 7 domain. An O-(pantetheine 4'-phosphoryl)serine modification is found at Ser9589. The tract at residues Ser9647–Thr10077 is condensation 8. The segment at Ser10127 to Val10529 is adenylation 8. The tract at residues Arg10588–Leu10768 is methyltransferase (M) domain 6. Positions Ala11052 to Ser11126 constitute a Carrier 8 domain. An O-(pantetheine 4'-phosphoryl)serine modification is found at Ser11086. The condensation 9 stretch occupies residues Ser11144–Thr11567. An adenylation 9 region spans residues Thr11616 to Val12019. In terms of domain architecture, Carrier 9 spans Ala12124–Ser12198. Ser12158 carries the post-translational modification O-(pantetheine 4'-phosphoryl)serine. Residues Ser12216 to Asp12645 are condensation 10. An adenylation 10 region spans residues Thr12696 to Val13096. The tract at residues Tyr13162 to Asp13343 is methyltransferase (M) domain 7. The region spanning Ala13620 to Ser13694 is the Carrier 10 domain. Residue Ser13654 is modified to O-(pantetheine 4'-phosphoryl)serine. Residues Glu13710–Leu14143 form a condensation 11 region. The interval Thr14194 to Val14598 is adenylation 11. One can recognise a Carrier 11 domain in the interval Ala14695–Gln14769. Ser14729 bears the O-(pantetheine 4'-phosphoryl)serine mark. The condensation 12 stretch occupies residues Asp14814–Gln15158. Positions Gln15169–Val15224 are disordered. Positions Ala15173 to Asn15211 are enriched in low complexity. The span at Ser15213–Val15224 shows a compositional bias: polar residues.

The protein belongs to the NRP synthetase family. Pantetheine 4'-phosphate serves as cofactor.

Functionally, nonribosomal peptide synthetase; part of the gene cluster that mediates the biosynthesis of the cycloundecapeptide cyclosporin A (CsA), a compound with antifungal activity used as an immunosuppressant drug. Cyclosporin A contains three non-proteinogenic amino acids: D-alanine, alpha-amino butyric acid and the unusual amino acid (4R)-4-[(E)-2-butenyl]-4-methyl-l-threonine (Bmt). The nonribosomal peptide synthetase (NRPS) catalyzes the elongation and cyclization of the undecapeptide chain. SimA contains 11 modules responsible for sequential uptake of substrates and chain elongation. In addition to the core condensation-adenylation-thiolation (C-A-T) domains present in each module, seven modules contain an additional N-methylation (M) domain (modules 2, 3, 4, 5, 7, 8, and 10). The terminal C domain (C12 or Ct) is implicated in cyclization of the peptidyl chains to form CsA. The first module (A1) takes up D-Ala which is provided by the alanine racemase simB. The A2, A3, A8, and A10 domains have the same substrate-specific signature for recognition of leucine residues. The unusual amino acid (4R)-4-[(E)-2-butenyl]-4-methyl-l-threonine (Bmt) is recognized by the fifth module (A5). The A11 domain recognizes L-Ala. The PKS simG mediates the biosynthesis of 3R-hydroxyl-4R-methyl-6E-octenoic acid from acetyl coenzyme A (acetyl-CoA), malonyl-CoA, and S-adenosylmethionine, and 3R-hydroxyl-4R-methyl-6E-octenoic acid is then be repeatedly oxidized by simI to 3R-hydroxy-4R-methyl-2-keto-6E-octenoic acid. The latter is likely converted to Bmt through the action of the aminotransferase SimJ. This is Cyclosporin synthetase simA from Tolypocladium inflatum (Cyclosporin fungus).